The following is a 345-amino-acid chain: Uroporphyrinogen decarboxylase (345 aa).

Substrate is bound by residues 27-31, Phe-46, Asp-76, Tyr-152, Ser-207, and His-320; that span reads RQAGR.

This sequence belongs to the uroporphyrinogen decarboxylase family. In terms of assembly, homodimer.

It localises to the cytoplasm. It carries out the reaction uroporphyrinogen III + 4 H(+) = coproporphyrinogen III + 4 CO2. Its pathway is porphyrin-containing compound metabolism; protoporphyrin-IX biosynthesis; coproporphyrinogen-III from 5-aminolevulinate: step 4/4. Its function is as follows. Catalyzes the decarboxylation of four acetate groups of uroporphyrinogen-III to yield coproporphyrinogen-III. The chain is Uroporphyrinogen decarboxylase from Oceanobacillus iheyensis (strain DSM 14371 / CIP 107618 / JCM 11309 / KCTC 3954 / HTE831).